A 1087-amino-acid polypeptide reads, in one-letter code: Gelsolin-related protein of 125 kDa (1087 aa).

Residues 1–40 form a disordered region; that stretch reads MEEDNIVDSKEIENNVEDKKEETPSSSPSPSSSLQQQQEE. The span at 7–23 shows a compositional bias: basic and acidic residues; the sequence is VDSKEIENNVEDKKEET. Over residues 24–40 the composition is skewed to low complexity; that stretch reads PSSSPSPSSSLQQQQEE. Gelsolin-like repeat units lie at residues 73–146, 183–286, 335–442, and 465–538; these read PFHF…PTFL, FLFK…FSKW, GKLL…FGTE, and TQLF…DNFW. Residues 550 to 598 adopt a coiled-coil conformation; that stretch reads INTFINENKEEKEKEEEEKEEEEEEEEEEEEEEEEEKDNNKTTTIIKHL. The disordered stretch occupies residues 555–592; that stretch reads NENKEEKEKEEEEKEEEEEEEEEEEEEEEEEKDNNKTT. Residues 562 to 586 show a composition bias toward acidic residues; that stretch reads EKEEEEKEEEEEEEEEEEEEEEEEK. Residues 614 to 692 form a Gelsolin-like 5 repeat; that stretch reads IFKADQINPF…EQYNESPLFK (79 aa). A coiled-coil region spans residues 710–912; that stretch reads IISYKQKLAE…ETVNEENEVG (203 aa). 4 stretches are compositionally biased toward basic and acidic residues: residues 732–770, 779–808, 817–840, and 849–900; these read KQQQ…KEEE, EEVK…KEVN, EEVK…KEEE, and EEVK…KVNE. Residues 732 to 1087 form a disordered region; it reads KQQQEQEQEQ…HNRSSSLTHA (356 aa). Positions 901–910 are enriched in acidic residues; sequence ENETVNEENE. 2 stretches are compositionally biased toward polar residues: residues 925 to 939 and 950 to 961; these read ANSS…NEGS and EPITPSVVSSSG. The segment covering 983–1002 has biased composition (basic residues); sequence QGRKGGRKSHGKNQPQHKKN. Positions 1018–1040 are enriched in polar residues; it reads KSLNLDIDNQSFDLNSINNNNSV. Residues 1047 to 1065 are compositionally biased toward low complexity; sequence SSPLSFSSSSINSNSTHNT. Residues 1066-1080 are compositionally biased toward basic residues; it reads PSKKNKNKNKKKHNR.

The protein belongs to the villin/gelsolin family. In terms of assembly, interacts with rasD and abpC.

It localises to the cytoplasmic vesicle. Its function is as follows. Involved in phototaxis. Required for coupling photodetection to the locomotory machinery of slugs. May be essential in the natural environment for the propagation of spores. The sequence is that of Gelsolin-related protein of 125 kDa (gnrA) from Dictyostelium discoideum (Social amoeba).